A 314-amino-acid chain; its full sequence is MMIPSVIAPPAIYSAFMRPAASLHSPFPAHPSFLVEDLLRINRPSGFLSQTAHSPCASPPNSTPLSIPDNCRILDRVSPGITEKHGPCSPKTPVSSKDPTYLKFGVSAILAPSPKKATSPPSVHSIHPKGFSVPYFDGSFCPFVRSSYFPAPSSVVPIPGTFSWPLAARGKPRRGMLRRAVFSDVQRKALEKMFQKQKYISKPDRKKLAAKLGLKDSQVKIWFQNRRMKWRNSKERELLSSGGCREQTLPTKTNPHPDLSDVGKKSSEDEDEDDACAPSHFCLSPRRVMSNSTDSSITFKHSDFSESEDEITVS.

Positions 175–234 (GMLRRAVFSDVQRKALEKMFQKQKYISKPDRKKLAAKLGLKDSQVKIWFQNRRMKWRNSK) form a DNA-binding region, homeobox. Disordered regions lie at residues 234–279 (KERE…CAPS) and 292–314 (STDS…ITVS). Basic and acidic residues predominate over residues 258 to 267 (DLSDVGKKSS). The segment covering 305–314 (SESEDEITVS) has biased composition (acidic residues).

The protein belongs to the H2.0 homeobox family.

Its subcellular location is the nucleus. This Danio rerio (Zebrafish) protein is Homeobox protein DBX1-A (dbx1a).